The following is a 252-amino-acid chain: dITP/XTP pyrophosphatase (252 aa).

Residue 7 to 12 coordinates substrate; that stretch reads THNEGK. Asp74 serves as the catalytic Proton acceptor. Mg(2+) is bound at residue Asp74. Substrate contacts are provided by residues Ser75 and 193-196; that span reads FGYD. Residues 201-224 form a disordered region; sequence PDDQPAGRVSTEPDHEGEPLTSAE. Substrate contacts are provided by residues Lys230 and 235 to 236; that span reads HR.

The protein belongs to the HAM1 NTPase family. In terms of assembly, homodimer. The cofactor is Mg(2+).

The catalysed reaction is XTP + H2O = XMP + diphosphate + H(+). It carries out the reaction dITP + H2O = dIMP + diphosphate + H(+). It catalyses the reaction ITP + H2O = IMP + diphosphate + H(+). Pyrophosphatase that catalyzes the hydrolysis of nucleoside triphosphates to their monophosphate derivatives, with a high preference for the non-canonical purine nucleotides XTP (xanthosine triphosphate), dITP (deoxyinosine triphosphate) and ITP. Seems to function as a house-cleaning enzyme that removes non-canonical purine nucleotides from the nucleotide pool, thus preventing their incorporation into DNA/RNA and avoiding chromosomal lesions. The sequence is that of dITP/XTP pyrophosphatase from Bifidobacterium longum subsp. infantis (strain ATCC 15697 / DSM 20088 / JCM 1222 / NCTC 11817 / S12).